The primary structure comprises 250 residues: Corrinoid adenosyltransferase MMAB (250 aa).

Residues 1 to 32 constitute a mitochondrion transit peptide; sequence MAVCGLGSRLGLGSRLGLRGCFGAARLLYPRF. Positions 34-59 are disordered; that stretch reads SRGPQGVEDGDRPQPSSKTPRIPKIY. Residues 60 to 63, 68 to 69, and Lys-78 contribute to the ATP site; these read TKTG and SS. Residue Ser-134 is modified to Phosphoserine. 190–194 is a binding site for ATP; the sequence is RRAER. Position 211 is an N6-succinyllysine (Lys-211). Asn-214 lines the ATP pocket. Position 230 is an N6-acetyllysine; alternate (Lys-230). Position 230 is an N6-succinyllysine; alternate (Lys-230).

This sequence belongs to the Cob(I)alamin adenosyltransferase family. Homotrimer. In terms of tissue distribution, expressed in liver and skeletal muscle.

The protein localises to the mitochondrion. The catalysed reaction is cob(I)alamin-[corrinoid adenosyltransferase] + ATP = apo-[corrinoid adenosyltransferase] + adenosylcob(III)alamin + triphosphate. Converts cob(I)alamin to adenosylcobalamin (adenosylcob(III)alamin), a coenzyme for methylmalonyl-CoA mutase, therefore participates in the final step of the vitamin B12 conversion. Generates adenosylcobalamin (AdoCbl) and directly delivers the cofactor to MUT in a transfer that is stimulated by ATP-binding to MMAB and gated by MMAA. This chain is Corrinoid adenosyltransferase MMAB, found in Homo sapiens (Human).